The following is a 288-amino-acid chain: Nucleotide-binding protein PM0169 (288 aa).

Residue 8–15 (GHSGAGKS) participates in ATP binding. 56–59 (DIRN) is a binding site for GTP.

It belongs to the RapZ-like family.

In terms of biological role, displays ATPase and GTPase activities. The chain is Nucleotide-binding protein PM0169 from Pasteurella multocida (strain Pm70).